The primary structure comprises 560 residues: MLSLLGATTLMLVAGRWVLPAASGEANLKSENVEIHIIDDNFFLKWNSSSESVRNVTFSADYQILGTDNWKKLPGCQHITSSKCNFSSVELKDVFEKIELRIRAEEGNNTSTWYEVEPFVPFLKAQIGPPDVHLEAEDKAIILSISPPGTEDSIMWALDRSSFRYSVVIWKNSSSLEERTETVYPEDKIYKLSPEITYCLKVKAELRLQSRVGCYSPVYCINTTERHKVPSPENVQINVDNQAYVLKWDYPYESTTFQAQWLRAFLKKIPGKHSNKWKQIPNCENVTTTHCVFPRDIFSMGIYYVRVRASNGNGTSFWSEEKEFNTEVKPIIFPPVISMKSITDDSLHVSVSASEESENMSVNQLYPLVYEVIFWENTSNAERKVLEKRTDFTFPNLKPLTVYCVKARALIENDRWNKGSSYSDTVCEKTKPGNTSKTWLIAGICTALFSILVVIYVVRVFLRCVKYVFFPSSKPPSSVDQYFSDQPLRNLLLSTSEEQTERCFIIENASIITEIEETNEVAEVHEEYNSQASQDSGNYSNEDENSGSKISEEFLQQDSV.

Positions 1–24 are cleaved as a signal peptide; sequence MLSLLGATTLMLVAGRWVLPAASG. Residues 25-437 are Extracellular-facing; sequence EANLKSENVE…EKTKPGNTSK (413 aa). Asparagine 47 and asparagine 55 each carry an N-linked (GlcNAc...) asparagine glycan. The cysteines at positions 76 and 84 are disulfide-linked. 4 N-linked (GlcNAc...) asparagine glycosylation sites follow: asparagine 85, asparagine 108, asparagine 109, and asparagine 172. 3 Fibronectin type-III domains span residues 126-226, 231-329, and 333-433; these read QIGP…TTER, SPEN…TEVK, and FPPV…TKPG. A disulfide bridge connects residues cysteine 199 and cysteine 220. Asparagine 222, asparagine 285, asparagine 313, asparagine 359, and asparagine 377 each carry an N-linked (GlcNAc...) asparagine glycan. Cysteines 283 and 291 form a disulfide. The cysteines at positions 404 and 427 are disulfide-linked. A glycan (N-linked (GlcNAc...) asparagine) is linked at asparagine 434. The helical transmembrane segment at 438–458 threads the bilayer; the sequence is TWLIAGICTALFSILVVIYVV. Over 459–560 the chain is Cytoplasmic; sequence RVFLRCVKYV…SEEFLQQDSV (102 aa). A lipid anchor (S-palmitoyl cysteine) is attached at cysteine 464. 2 positions are modified to phosphotyrosine; by TYK2: tyrosine 467 and tyrosine 482. Residues 492-501 are important for interaction with TYK2; that stretch reads LLSTSEEQTE. A phosphoserine mark is found at serine 496 and serine 536. Residues 524-560 form a disordered region; sequence VHEEYNSQASQDSGNYSNEDENSGSKISEEFLQQDSV. Over residues 529-540 the composition is skewed to polar residues; it reads NSQASQDSGNYS.

Belongs to the type II cytokine receptor family. In terms of assembly, heterodimer with IFNAR2; forming the receptor for type I interferon. Interacts with TYK2. Interacts with STAT1 and STAT2; the interaction requires its phosphorylation at Tyr-482. Interacts (serine-phosphorylated form) with FBXW11, the substrate recognition component of a SCF (SKP1-CUL1-F-box protein) E3 ubiquitin-protein ligase complex. Interacts with SHMT2; this promotes interaction with ABRAXAS2 and the BRISC complex. Interacts with TRIM10; this interaction prevents association between IFNAR1 and TYK2. In terms of processing, ubiquitinated, leading to its internalization and degradation. Polyubiquitinated via 'Lys-48'-linked and 'Lys-63'-linked ubiquitin chains, leading to receptor internalization and lysosomal degradation. The 'Lys-63'-linked ubiquitin chains are cleaved off by the BRISC complex. Phosphorylated on tyrosine residues in response to interferon-binding: phosphorylation by TYK2 tyrosine kinase creates docking sites for STAT proteins. Phosphorylated on serine residues in response to interferon binding; this promotes interaction with FBXW11 and ubiquitination. Post-translationally, palmitoylation at Cys-464 is required for the activation of STAT1 and STAT2. Expressed in the endometrium. Expressed in all tissues examined except conceptus at day 15 of pregnancy.

The protein resides in the cell membrane. Its subcellular location is the late endosome. The protein localises to the lysosome. In terms of biological role, together with IFNAR2, forms the heterodimeric receptor for type I interferons (including interferons alpha, beta, epsilon, omega and kappa). Type I interferon binding activates the JAK-STAT signaling cascade, resulting in transcriptional activation or repression of interferon-regulated genes that encode the effectors of the interferon response. Mechanistically, type I interferon-binding brings the IFNAR1 and IFNAR2 subunits into close proximity with one another, driving their associated Janus kinases (JAKs) (TYK2 bound to IFNAR1 and JAK1 bound to IFNAR2) to cross-phosphorylate one another. The activated kinases phosphorylate specific tyrosine residues on the intracellular domains of IFNAR1 and IFNAR2, forming docking sites for the STAT transcription factors. STAT proteins are then phosphorylated by the JAKs, promoting their translocation into the nucleus to regulate expression of interferon-regulated genes. Can also act independently of IFNAR2: form an active IFNB1 receptor by itself and activate a signaling cascade that does not involve activation of the JAK-STAT pathway. This is Interferon alpha/beta receptor 1 (IFNAR1) from Ovis aries (Sheep).